The primary structure comprises 197 residues: Phosphoheptose isomerase (197 aa).

Residues 34 to 196 enclose the SIS domain; it reads MVHCLLGGNK…DRTLFPQDEQ (163 aa). 49–51 is a substrate binding site; sequence NGG. Residues histidine 58 and glutamate 62 each coordinate Zn(2+). Substrate is bound by residues glutamate 62, 91-92, 117-119, serine 122, and glutamine 172; these read ND and STS. Residues glutamine 172 and histidine 180 each contribute to the Zn(2+) site.

The protein belongs to the SIS family. GmhA subfamily. In terms of assembly, homotetramer. It depends on Zn(2+) as a cofactor.

It is found in the cytoplasm. It carries out the reaction 2 D-sedoheptulose 7-phosphate = D-glycero-alpha-D-manno-heptose 7-phosphate + D-glycero-beta-D-manno-heptose 7-phosphate. Its pathway is carbohydrate biosynthesis; D-glycero-D-manno-heptose 7-phosphate biosynthesis; D-glycero-alpha-D-manno-heptose 7-phosphate and D-glycero-beta-D-manno-heptose 7-phosphate from sedoheptulose 7-phosphate: step 1/1. Functionally, catalyzes the isomerization of sedoheptulose 7-phosphate in D-glycero-D-manno-heptose 7-phosphate. The sequence is that of Phosphoheptose isomerase from Shewanella baltica (strain OS223).